Consider the following 263-residue polypeptide: Palmitoyltransferase ZDHHC22 (263 aa).

The Cytoplasmic portion of the chain corresponds to 1–9; it reads MLALRLLNV. Residues 10–30 traverse the membrane as a helical segment; the sequence is VAPAYFLCISLVTFVLQLFLF. Residues 31-48 lie on the Lumenal side of the membrane; sequence LPSMREDPTATPLFSPAV. The helical transmembrane segment at 49-69 threads the bilayer; it reads LHGALFLFLSANALGNYVLVI. The Cytoplasmic segment spans residues 70-125; sequence QNSPDDLGTCQGTMSQRPQCPPPSTHFCRVCSRVTLRHDHHCFFTGNCIGSRNMRN. Residues 91–131 enclose the DHHC domain; it reads PPSTHFCRVCSRVTLRHDHHCFFTGNCIGSRNMRNFILFCL. Catalysis depends on Cys111, which acts as the S-palmitoyl cysteine intermediate. The next 2 helical transmembrane spans lie at 126-146 and 147-167; these read FILF…AGVA and YISA…TLLP. Residues 168 to 182 lie on the Cytoplasmic side of the membrane; that stretch reads TSISQFFSGAVLGSD. The helical transmembrane segment at 183 to 203 threads the bilayer; that stretch reads MFVILMLYLWFAVGLACAGFC. Over 204–263 the chain is Lumenal; it reads CHQLLLILRGQTRYQVRKGMAVRARPWRKNLQEVFGKRWLLGLLVPMFNVGTESSKQQDK.

Belongs to the DHHC palmitoyltransferase family. In terms of assembly, interacts with CNN3.

The protein resides in the endoplasmic reticulum membrane. Its subcellular location is the golgi apparatus membrane. The catalysed reaction is L-cysteinyl-[protein] + hexadecanoyl-CoA = S-hexadecanoyl-L-cysteinyl-[protein] + CoA. Palmitoyltransferase that could catalyze the addition of palmitate onto various protein substrates and be involved in a variety of cellular processes. Catalyzes the palmitoylation of KCNMA1, regulating localization of KCNMA1 to the plasma membrane. Might also mediate palmitoylation of CNN3. The polypeptide is Palmitoyltransferase ZDHHC22 (Mus musculus (Mouse)).